The primary structure comprises 168 residues: 2-oxo-4-hydroxy-4-carboxy-5-ureidoimidazoline decarboxylase (168 aa).

Catalysis depends on His-70, which acts as the Proton donor; for OHCU decarboxylase activity. Over residues 70–79 (HPDLGERTEM) the composition is skewed to basic and acidic residues. Residues 70–93 (HPDLGERTEMTDASEAEQASAELD) are disordered. Substrate is bound by residues Pro-71, 83-87 (SEAEQ), and 118-122 (FVMAV).

This sequence belongs to the OHCU decarboxylase family.

It catalyses the reaction 5-hydroxy-2-oxo-4-ureido-2,5-dihydro-1H-imidazole-5-carboxylate + H(+) = (S)-allantoin + CO2. The protein operates within purine metabolism; urate degradation; (S)-allantoin from urate: step 3/3. Catalyzes the stereoselective decarboxylation of 2-oxo-4-hydroxy-4-carboxy-5-ureidoimidazoline (OHCU) to (S)-allantoin. The chain is 2-oxo-4-hydroxy-4-carboxy-5-ureidoimidazoline decarboxylase from Haloferax volcanii (strain ATCC 29605 / DSM 3757 / JCM 8879 / NBRC 14742 / NCIMB 2012 / VKM B-1768 / DS2) (Halobacterium volcanii).